Here is a 426-residue protein sequence, read N- to C-terminus: MGEKVSIILTSYNKPDYLQKAIESVIQQTHDLWELFIMDDHSNAETTAVIHKYLHDRRIQYHNSFVHPADRLKTARYATLINSALPFADGDYISYLTDDTVYHPERLSRMVQEFSHKPEAQAVYSKQKVVHVNERGEEISHFYRNANAVLDQAAFQVDHCSVMHRRSLLNLIHHKFGGYWDDDMKHWNHGDAIFWARLNNFTPFLPINEVLDTTYKTPDSFQNAYRFLPADLIDGSFVKGSDQNVYFFDQGVRHPVGEKWGFLYLNRTVAVPDPYLFQYRIGKILNIPNYILVKEADHPAIFYIEAGKKRRIVDQYAFQFYQFQRKDIVTIGKEEMETLPEGPPITWKRSELIKNPPGRRLFFIEREPFLFLNGVFHPISEQVTRKFFLHQKPISASFRNIQQFPIGKPFYPVYDEIIKKLNIATE.

This sequence to B.subtilis spore coat polysaccharide biosynthesis protein SpsA.

May be involved in maturation of the outermost layer of the spore. The polypeptide is Protein CgeD (cgeD) (Bacillus subtilis (strain 168)).